Consider the following 334-residue polypeptide: Protein-methionine-sulfoxide reductase catalytic subunit MsrP (334 aa).

Residues 1 to 44 (MKKVSRLTEADVTAESAFFMQRRQVLKALGITTAALSLPTAAHA) constitute a signal peptide (tat-type signal). Mo-molybdopterin-binding positions include N88, 91 to 92 (YE), C146, T181, N233, R238, and 249 to 251 (GIK).

It belongs to the MsrP family. Heterodimer of a catalytic subunit (MsrP) and a heme-binding subunit (MsrQ). The cofactor is Mo-molybdopterin. Predicted to be exported by the Tat system. The position of the signal peptide cleavage has not been experimentally proven.

The protein localises to the periplasm. It carries out the reaction L-methionyl-[protein] + a quinone + H2O = L-methionyl-(S)-S-oxide-[protein] + a quinol. It catalyses the reaction L-methionyl-[protein] + a quinone + H2O = L-methionyl-(R)-S-oxide-[protein] + a quinol. Functionally, part of the MsrPQ system that repairs oxidized periplasmic proteins containing methionine sulfoxide residues (Met-O), using respiratory chain electrons. Thus protects these proteins from oxidative-stress damage caused by reactive species of oxygen and chlorine generated by the host defense mechanisms. MsrPQ is essential for the maintenance of envelope integrity under bleach stress, rescuing a wide series of structurally unrelated periplasmic proteins from methionine oxidation. The catalytic subunit MsrP is non-stereospecific, being able to reduce both (R-) and (S-) diastereoisomers of methionine sulfoxide. The protein is Protein-methionine-sulfoxide reductase catalytic subunit MsrP of Cronobacter sakazakii (strain ATCC BAA-894) (Enterobacter sakazakii).